The following is a 320-amino-acid chain: MKRTLKVSFFILCLLPLFLGSKAEQCGSQAGGAVCPNGLCCSKFGFCGSTDPYCGDGCQSQCKSSPTPTIPTPSTGGGDVGRLVPSSLFDQMLKYRNDGRCAGHGFYTYDAFIAAARSFNGFGTTGDDNTKKKELAAFLAQTSHETTGGWPTAPDGPYAWGYCFVSEQNTQEVYCSPKDWPCAPGKKYYGRGPIQLTHNYNYGLAGQAIKEDLINNPDLLSTNPTVSFKTAIWFWMTPQANKPSSHDVITGRWTPSAADSSAGRVPGYGVITNIINGGIECGHGQDNRVDDRVGFYKRYCQIFGVDPGGNLDCNNQRSFA.

Residues 1–23 (MKRTLKVSFFILCLLPLFLGSKA) form the signal peptide. The 41-residue stretch at 24–64 (EQCGSQAGGAVCPNGLCCSKFGFCGSTDPYCGDGCQSQCKS) folds into the Chitin-binding type-1 domain. 7 cysteine pairs are disulfide-bonded: cysteine 26-cysteine 41, cysteine 35-cysteine 47, cysteine 40-cysteine 54, cysteine 58-cysteine 62, cysteine 101-cysteine 163, cysteine 175-cysteine 182, and cysteine 281-cysteine 313. The Proton donor role is filled by glutamate 145.

It belongs to the glycosyl hydrolase 19 family. Chitinase class I subfamily.

It carries out the reaction Random endo-hydrolysis of N-acetyl-beta-D-glucosaminide (1-&gt;4)-beta-linkages in chitin and chitodextrins.. Defense against chitin-containing fungal pathogens. The chain is Endochitinase from Pisum sativum (Garden pea).